The following is a 257-amino-acid chain: 3-methyl-2-oxobutanoate hydroxymethyltransferase (257 aa).

Mg(2+)-binding residues include Asp44 and Asp83. 3-methyl-2-oxobutanoate-binding positions include 44–45, Asp83, and Lys113; that span reads DS. Residue Glu115 coordinates Mg(2+). The Proton acceptor role is filled by Glu182.

This sequence belongs to the PanB family. In terms of assembly, homodecamer; pentamer of dimers. Requires Mg(2+) as cofactor.

The protein localises to the cytoplasm. It catalyses the reaction 3-methyl-2-oxobutanoate + (6R)-5,10-methylene-5,6,7,8-tetrahydrofolate + H2O = 2-dehydropantoate + (6S)-5,6,7,8-tetrahydrofolate. The protein operates within cofactor biosynthesis; (R)-pantothenate biosynthesis; (R)-pantoate from 3-methyl-2-oxobutanoate: step 1/2. In terms of biological role, catalyzes the reversible reaction in which hydroxymethyl group from 5,10-methylenetetrahydrofolate is transferred onto alpha-ketoisovalerate to form ketopantoate. The chain is 3-methyl-2-oxobutanoate hydroxymethyltransferase from Rippkaea orientalis (strain PCC 8801 / RF-1) (Cyanothece sp. (strain PCC 8801)).